A 70-amino-acid polypeptide reads, in one-letter code: Large ribosomal subunit protein bL31 (70 aa).

The Zn(2+) site is built by Cys16, Cys18, Cys36, and Cys39.

Belongs to the bacterial ribosomal protein bL31 family. Type A subfamily. Part of the 50S ribosomal subunit. The cofactor is Zn(2+).

Functionally, binds the 23S rRNA. The sequence is that of Large ribosomal subunit protein bL31 from Fervidobacterium nodosum (strain ATCC 35602 / DSM 5306 / Rt17-B1).